Reading from the N-terminus, the 138-residue chain is Large ribosomal subunit protein uL16 (138 aa).

Over residues 1–17 (MLIPRKVKHRKQHHPRQ) the composition is skewed to basic residues. The tract at residues 1-24 (MLIPRKVKHRKQHHPRQRGIASGG) is disordered.

It belongs to the universal ribosomal protein uL16 family. In terms of assembly, part of the 50S ribosomal subunit.

Its function is as follows. Binds 23S rRNA and is also seen to make contacts with the A and possibly P site tRNAs. This chain is Large ribosomal subunit protein uL16, found in Mycolicibacterium gilvum (strain PYR-GCK) (Mycobacterium gilvum (strain PYR-GCK)).